The chain runs to 234 residues: 2-hydroxy-3-keto-5-methylthiopentenyl-1-phosphate phosphatase (234 aa).

This sequence belongs to the HAD-like hydrolase superfamily. MtnX family.

It carries out the reaction 2-hydroxy-5-methylsulfanyl-3-oxopent-1-enyl phosphate + H2O = 1,2-dihydroxy-5-(methylsulfanyl)pent-1-en-3-one + phosphate. Its pathway is amino-acid biosynthesis; L-methionine biosynthesis via salvage pathway; L-methionine from S-methyl-5-thio-alpha-D-ribose 1-phosphate: step 4/6. In terms of biological role, dephosphorylates 2-hydroxy-3-keto-5-methylthiopentenyl-1-phosphate (HK-MTPenyl-1-P) yielding 1,2-dihydroxy-3-keto-5-methylthiopentene (DHK-MTPene). This is 2-hydroxy-3-keto-5-methylthiopentenyl-1-phosphate phosphatase from Bacillus velezensis (strain DSM 23117 / BGSC 10A6 / LMG 26770 / FZB42) (Bacillus amyloliquefaciens subsp. plantarum).